A 77-amino-acid polypeptide reads, in one-letter code: Envelope glycoprotein (77 aa).

Residues 1–24 (LERQKNQNWYEGWFNSSPWFTTLL) are Extracellular-facing. Residues 25–45 (STIAGPLLLLLLLLILGPCII) traverse the membrane as a helical segment. Residue cysteine 43 is the site of S-palmitoyl cysteine; by host attachment. Topologically, residues 46–77 (NRLVQFINNRVSAVKILVLRQKYQTLDNEDNL) are cytoplasmic. The YXXL motif; contains endocytosis signal motif lies at 68–71 (YQTL).

In terms of assembly, the mature envelope protein (Env) consists of a trimer of SU-TM heterodimers attached by noncovalent interactions or by a labile interchain disulfide bond. Specific enzymatic cleavages in vivo yield mature proteins. Envelope glycoproteins are synthesized as an inactive precursor that is N-glycosylated and processed likely by host cell furin or by a furin-like protease in the Golgi to yield the mature SU and TM proteins. The cleavage site between SU and TM requires the minimal sequence [KR]-X-[KR]-R. The R-peptide is released from the C-terminus of the cytoplasmic tail of the TM protein upon particle formation as a result of proteolytic cleavage by the viral protease. Cleavage of this peptide is required for TM to become fusogenic. In terms of processing, the transmembrane protein is palmitoylated. Post-translationally, the R-peptide is palmitoylated.

The protein resides in the virion membrane. The protein localises to the host cell membrane. In terms of biological role, the surface protein (SU) attaches the virus to the host cell by binding to its receptor. This interaction triggers the refolding of the transmembrane protein (TM) and is thought to activate its fusogenic potential by unmasking its fusion peptide. Fusion occurs at the host cell plasma membrane. Functionally, the transmembrane protein (TM) acts as a class I viral fusion protein. Under the current model, the protein has at least 3 conformational states: pre-fusion native state, pre-hairpin intermediate state, and post-fusion hairpin state. During viral and target cell membrane fusion, the coiled coil regions (heptad repeats) assume a trimer-of-hairpins structure, positioning the fusion peptide in close proximity to the C-terminal region of the ectodomain. The formation of this structure appears to drive apposition and subsequent fusion of viral and target cell membranes. Membranes fusion leads to delivery of the nucleocapsid into the cytoplasm. This Woolly monkey sarcoma virus (WMSV) protein is Envelope glycoprotein (env).